The primary structure comprises 503 residues: Lysine--tRNA ligase (503 aa).

Mg(2+) is bound by residues Glu412 and Glu419.

This sequence belongs to the class-II aminoacyl-tRNA synthetase family. As to quaternary structure, homodimer. Mg(2+) is required as a cofactor.

It is found in the cytoplasm. The catalysed reaction is tRNA(Lys) + L-lysine + ATP = L-lysyl-tRNA(Lys) + AMP + diphosphate. The polypeptide is Lysine--tRNA ligase (Idiomarina loihiensis (strain ATCC BAA-735 / DSM 15497 / L2-TR)).